The primary structure comprises 334 residues: Ribosomal RNA small subunit methyltransferase C (334 aa).

The protein belongs to the methyltransferase superfamily. RsmC family. As to quaternary structure, monomer.

It localises to the cytoplasm. The enzyme catalyses guanosine(1207) in 16S rRNA + S-adenosyl-L-methionine = N(2)-methylguanosine(1207) in 16S rRNA + S-adenosyl-L-homocysteine + H(+). In terms of biological role, specifically methylates the guanine in position 1207 of 16S rRNA in the 30S particle. This Idiomarina loihiensis (strain ATCC BAA-735 / DSM 15497 / L2-TR) protein is Ribosomal RNA small subunit methyltransferase C.